We begin with the raw amino-acid sequence, 206 residues long: Large ribosomal subunit protein uL4 (206 aa).

The tract at residues 63–94 (MYKQKGTGRARHHSARAPQFRGGGKAHGPVVR) is disordered. Residues 64 to 77 (YKQKGTGRARHHSA) are compositionally biased toward basic residues.

This sequence belongs to the universal ribosomal protein uL4 family. In terms of assembly, part of the 50S ribosomal subunit.

Functionally, one of the primary rRNA binding proteins, this protein initially binds near the 5'-end of the 23S rRNA. It is important during the early stages of 50S assembly. It makes multiple contacts with different domains of the 23S rRNA in the assembled 50S subunit and ribosome. Forms part of the polypeptide exit tunnel. This Mesorhizobium japonicum (strain LMG 29417 / CECT 9101 / MAFF 303099) (Mesorhizobium loti (strain MAFF 303099)) protein is Large ribosomal subunit protein uL4.